Reading from the N-terminus, the 461-residue chain is MKEFDTIAAVATPVGEGGISIIRISGDKSLDIVSSIFKGKNDRTLDDIKPYSMRYGFIIEKESKEMIDEVLVSYMKGPRSFTAEDTLEINCHGGVIPTKKILKELIKSGARLAEPGEFTKRAFLNGRIDLSQAEAVIDIIRSKTDLSMKSALKQAEGTLSKEINSIRNRMIKIIAHIEATVDYPEDDLEEITGQKIKVDLKEIINKIDNLISASEEGKILREGLNTVIVGKPNVGKSSLLNALINENKAIVTEIPGTTRDVIEEYINIDGIPIKIVDTAGIRETEDVVEKIGVEKSKEKIDEADLVIFMLDLSRKIDEEDIEIMDFIKNKKYIVLLNKLDLNKDLNEENHFIKELDSKYIIKTSVKNNSGLNELKECIKNLFFSGEIKSDELIVTNARHQEALIRSRESCIQAIETLSDEISIDLASIDIRNAWKYLGEITGDTLDENIIDKIFSEFCLGK.

Positions 23, 88, and 127 each coordinate (6S)-5-formyl-5,6,7,8-tetrahydrofolate. A TrmE-type G domain is found at 223-383 (GLNTVIVGKP…LKECIKNLFF (161 aa)). N233 is a binding site for K(+). Residues 233-238 (NVGKSS), 252-258 (TEIPGTT), and 277-280 (DTAG) contribute to the GTP site. Residue S237 coordinates Mg(2+). 3 residues coordinate K(+): T252, I254, and T257. Residue T258 coordinates Mg(2+). K461 is a (6S)-5-formyl-5,6,7,8-tetrahydrofolate binding site.

This sequence belongs to the TRAFAC class TrmE-Era-EngA-EngB-Septin-like GTPase superfamily. TrmE GTPase family. Homodimer. Heterotetramer of two MnmE and two MnmG subunits. Requires K(+) as cofactor.

It is found in the cytoplasm. Functionally, exhibits a very high intrinsic GTPase hydrolysis rate. Involved in the addition of a carboxymethylaminomethyl (cmnm) group at the wobble position (U34) of certain tRNAs, forming tRNA-cmnm(5)s(2)U34. This Clostridium botulinum (strain Okra / Type B1) protein is tRNA modification GTPase MnmE.